We begin with the raw amino-acid sequence, 240 residues long: uncharacterized protein (240 aa).

Positions 1–17 are cleaved as a signal peptide; that stretch reads MRMAFMLLALLFSFRNA.

This is an uncharacterized protein from Treponema pallidum (strain Nichols).